The sequence spans 310 residues: MRKDRQNKITEVGIYLKDLQNRLCRAFEKEEGESRFQETLWEKPNGGGGRTRLLTEGHVIEQGGVNFSCVYGNQLPPAATQKHPEISGFDFQAEGLSLVIHPRNPYVPTVHANFRFFIAGKDEADPRWWFGGGYDLTPYYGFEEDCRHWHRVAKKACDRFGEAIYPRFKAACDDYFYLKHRNEPRGIGGLFFDDLNEWEFKRCFEFIKILGDSFLEAYLPIMQNRKNHPYGERQREFQLYRRGRYVEFNLLYDRGTRFGLEFGGRTESILMSLPPRVVWRPNWEPEPGSEEARLYEDYLVRRNWVSVSGA.

Serine 97 contacts substrate. A divalent metal cation contacts are provided by histidine 101 and histidine 111. The Proton donor role is filled by histidine 111. 113-115 (NFR) is a binding site for substrate. Residues histidine 150 and histidine 180 each coordinate a divalent metal cation. The segment at 245–280 (YVEFNLLYDRGTRFGLEFGGRTESILMSLPPRVVWR) is important for dimerization. 263-265 (GGR) provides a ligand contact to substrate.

Belongs to the aerobic coproporphyrinogen-III oxidase family. As to quaternary structure, homodimer. The cofactor is a divalent metal cation.

The protein resides in the cytoplasm. It catalyses the reaction coproporphyrinogen III + O2 + 2 H(+) = protoporphyrinogen IX + 2 CO2 + 2 H2O. Its pathway is porphyrin-containing compound metabolism; protoporphyrin-IX biosynthesis; protoporphyrinogen-IX from coproporphyrinogen-III (O2 route): step 1/1. Its function is as follows. Involved in the heme biosynthesis. Catalyzes the aerobic oxidative decarboxylation of propionate groups of rings A and B of coproporphyrinogen-III to yield the vinyl groups in protoporphyrinogen-IX. This Coxiella burnetii (strain Dugway 5J108-111) protein is Oxygen-dependent coproporphyrinogen-III oxidase.